The primary structure comprises 130 residues: Protein BLT4 (130 aa).

A signal peptide spans 1-25 (MARTAATKLALVPLVAAMLLVAADA). Residues 80 to 130 (VPARTTPAGPQASPPGAASASPTRSAPVSTALRSTDRTRAPHISSDRRLVG) form a disordered region. The span at 84 to 110 (TTPAGPQASPPGAASASPTRSAPVSTA) shows a compositional bias: low complexity. Over residues 113–130 (STDRTRAPHISSDRRLVG) the composition is skewed to basic and acidic residues.

It belongs to the plant LTP family. Shoot meristem.

Functionally, possible dehydrative stress responsive protein. Not shown to have lipid transfer activity. The polypeptide is Protein BLT4 (BLT4) (Hordeum vulgare (Barley)).